We begin with the raw amino-acid sequence, 376 residues long: MKILIDENMPYAAELFSELGEVIAKSGRTLTADDLIDVDALMIRSVTKVNSELLSKANKLSFVGTATAGMDHVNQALLKNKGVFFTAAPGCNKVGVAEYVLSCVMVLAQQHGFSIFDKTFGIIGAGQVGSYLAQCLDALSIPYLLNDPIKEQEGDTRSFVSLDELLEKSDVISLHTPITRDGNFPTHHLIGQERLLTLRHDQILINAARGPVVDNDALKNRLLIQDGFKAVLDVFEFEPEVDIALLPLLSFATPHIAGYGLEGKARGTTMIFNSFCEFLQREERADPQNLLPVAPIPNVTLNQQWDHSTLHNLIQLVYDVRKDDAVFRKEISTIGAFDNMRKDYWDRREYSAITITGNKDCGLTPLKQLGFTIEEV.

Substrate is bound by residues S45 and T67. NAD(+)-binding positions include 127 to 128, D147, and T176; that span reads QV. Residue R209 is part of the active site. D233 provides a ligand contact to NAD(+). The active site involves E238. The active-site Proton donor is the H255. G258 lines the NAD(+) pocket. Position 259 (Y259) interacts with substrate.

Belongs to the D-isomer specific 2-hydroxyacid dehydrogenase family. PdxB subfamily. As to quaternary structure, homodimer.

Its subcellular location is the cytoplasm. The catalysed reaction is 4-phospho-D-erythronate + NAD(+) = (R)-3-hydroxy-2-oxo-4-phosphooxybutanoate + NADH + H(+). Its pathway is cofactor biosynthesis; pyridoxine 5'-phosphate biosynthesis; pyridoxine 5'-phosphate from D-erythrose 4-phosphate: step 2/5. In terms of biological role, catalyzes the oxidation of erythronate-4-phosphate to 3-hydroxy-2-oxo-4-phosphonooxybutanoate. This Aliivibrio salmonicida (strain LFI1238) (Vibrio salmonicida (strain LFI1238)) protein is Erythronate-4-phosphate dehydrogenase.